The chain runs to 197 residues: Viral polyamine acetyltransferase (197 aa).

Asparagine 22 is a binding site for acetyl-CoA. Glutamate 27 is an active-site residue. An N-acetyltransferase domain is found at 102-182 (SYTPDDKCLY…YQYGITKPFD (81 aa)). Acetyl-CoA-binding residues include isoleucine 115, serine 117, glycine 121, glycine 123, alanine 125, threonine 126, threonine 149, asparagine 150, and lysine 159.

Belongs to the acetyltransferase family.

The enzyme catalyses spermine + acetyl-CoA = N(1)-acetylspermine + CoA + H(+). The catalysed reaction is spermidine + acetyl-CoA = N(1)-acetylspermidine + CoA + H(+). It carries out the reaction spermidine + acetyl-CoA = N(8)-acetylspermidine + CoA + H(+). It catalyses the reaction putrescine + acetyl-CoA = N-acetylputrescine + CoA + H(+). The enzyme catalyses cadaverine + acetyl-CoA = N-acetylcadaverine + CoA + H(+). The catalysed reaction is sym-homospermidine + acetyl-CoA = N(1)-acetyl-sym-homospermidine + CoA + H(+). Its function is as follows. Acetylates polyamines such as spermine, spermidine, cadaverine, homospermidine and putrescine (the latter with low efficiency). May play a role in the regulation of polyamine catabolism in the host during viral replication. This is Viral polyamine acetyltransferase from Chlorella (PBCV-1).